A 272-amino-acid polypeptide reads, in one-letter code: 2-dehydro-3-deoxyphosphooctonate aldolase (272 aa).

It belongs to the KdsA family.

The protein localises to the cytoplasm. The enzyme catalyses D-arabinose 5-phosphate + phosphoenolpyruvate + H2O = 3-deoxy-alpha-D-manno-2-octulosonate-8-phosphate + phosphate. It participates in carbohydrate biosynthesis; 3-deoxy-D-manno-octulosonate biosynthesis; 3-deoxy-D-manno-octulosonate from D-ribulose 5-phosphate: step 2/3. The protein operates within bacterial outer membrane biogenesis; lipopolysaccharide biosynthesis. In Geobacter sulfurreducens (strain ATCC 51573 / DSM 12127 / PCA), this protein is 2-dehydro-3-deoxyphosphooctonate aldolase.